The primary structure comprises 141 residues: Hemoglobin subunit alpha (141 aa).

A Globin domain is found at 1 to 141; it reads VLSAADKTNV…VSTVLTSKYR (141 aa). S3 bears the Phosphoserine mark. At K7 the chain carries N6-succinyllysine. The residue at position 8 (T8) is a Phosphothreonine. An N6-succinyllysine modification is found at K11. The residue at position 16 (K16) is an N6-acetyllysine; alternate. Position 16 is an N6-succinyllysine; alternate (K16). S35 is modified (phosphoserine). N6-succinyllysine is present on K40. Position 49 is a phosphoserine (S49). Residue H58 coordinates O2. H87 contacts heme b. S102 carries the post-translational modification Phosphoserine. Residue T108 is modified to Phosphothreonine. Phosphoserine occurs at positions 124 and 131. T134 and T137 each carry phosphothreonine. A Phosphoserine modification is found at S138.

The protein belongs to the globin family. In terms of assembly, heterotetramer of two alpha chains and two beta chains. In terms of tissue distribution, red blood cells.

Functionally, involved in oxygen transport from the lung to the various peripheral tissues. The chain is Hemoglobin subunit alpha from Sciurus carolinensis (Eastern gray squirrel).